We begin with the raw amino-acid sequence, 387 residues long: Oxidase FUB9 (387 aa).

Residues 1–20 form a disordered region; that stretch reads MSRTNLPIQPAKMSDATSSK. The FMN hydroxy acid dehydrogenase domain occupies 18–379; sequence SSKPQIFSIQ…TPAHLSLLNA (362 aa). Residue Y44 participates in a 2-oxocarboxylate binding. FMN is bound by residues S126, Q150, and T178. R187 contacts a 2-oxocarboxylate. K250 lines the FMN pocket. The active-site Proton acceptor is the H274. R277 lines the a 2-oxocarboxylate pocket. Residues 305-309 and 328-329 each bind FMN; these read DGGFR and GR.

It belongs to the FMN-dependent alpha-hydroxy acid dehydrogenase family. It depends on FMN as a cofactor.

The protein operates within mycotoxin biosynthesis. Its function is as follows. Oxidase; part of the gene cluster that mediates the biosynthesis of fusaric acid, a mycotoxin with low to moderate toxicity to animals and humans, but with high phytotoxic properties. L-aspartate is suggested as fusaric acid amino acid precursor that is activated and further processed to O-acetyl-L-homoserine by cluster enzymes aspartate kinase FUB3 and homoserine O-acetyltransferase FUB5, as well as enzymes of the primary metabolism. The polyketide synthase (PKS) FUB1 generates the triketide trans-2-hexenal which is presumptively released by the hydrolase FUB4 and linked to the NRPS-bound amino acid precursor by NAD(P)-dependent dehydrogenase FUB6. FUB1, FUB4, and the non-canonical NRPS Fub8 may form an enzyme complex. Further processing of the NRPS-bound intermediate might be carried out by FUB6 and the sulfhydrylase FUB7, enabling a spontaneous electrocyclization to close the carbon backbone of fusaric acid. Dihydrofusaric acid is likely to be released via reduction by the thioester reductase (TR) domain of FUB8 whereupon the final oxidation to fusaric acid may (also) be performed by the FMN-dependent dehydrogenase FUB9. The protein is Oxidase FUB9 of Gibberella moniliformis (strain M3125 / FGSC 7600) (Maize ear and stalk rot fungus).